We begin with the raw amino-acid sequence, 1106 residues long: Exportin-T (1106 aa).

The tract at residues 336–357 (TPLESRTRTGPSAQNGQSDTSD) is disordered. Residues 343–357 (RTGPSAQNGQSDTSD) are compositionally biased toward polar residues.

The protein belongs to the exportin family.

The protein resides in the nucleus. It is found in the cytoplasm. Its function is as follows. tRNA nucleus export receptor which facilitates tRNA translocation across the nuclear pore complex. Involved in pre-tRNA splicing, probably by affecting the interaction of pre-tRNA with splicing endonuclease. The protein is Exportin-T (LOS1) of Mycosarcoma maydis (Corn smut fungus).